The sequence spans 450 residues: MIQLFDYYNQETQDLHDSLLAAGYACPTIVIEANGFLPDDMISPYTYFLGDEEGVDHPLFFNQVPVPPFWEITGDHQVARVSDMGEERARIHYASQARGRLVKQVDWLDKKGQLRLSERYNKQGRCFAKTAYKSGQEAFNTTYYSTDGQERIVENHVTGDIILTLDQEPLRIFKSRVDFIRFFLERLDLDLDHILFNSLAYSFLVSHSLTGRAGQDILFWQEPLYDELPGNMQLILDNSQLRTQTIVIPDLATYEKAMSLAAADQQQKFLHLGYHYDFKRDNYLRKDALILTHSDQIEGLDTLVQSLPQLVFRIAALTEMSPKLLSMLSYKNVVLYQNASLKQIEQLYLESDIYLDINHGGQVLQAVRKAFENNLLILGFEQTLHDRHYIAQQHIFDSSQPAQLASILEEALCGVEQMRSALQAQGRHANDVPVSLYQETLQSLLGGQHG.

The protein belongs to the GtfB family. Forms a heterotetramer with 2 subunits each of GtfA and GtfB. Part of the accessory SecA2/SecY2 protein translocation apparatus required to export cell wall protein GspB.

It localises to the cell membrane. It participates in protein modification; protein glycosylation. Its function is as follows. Required for polymorphic O-glycosylation of GspB, a serine-rich repeat cell wall protein encoded upstream in the same operon. A substrate-binding protein that is part of the accessory SecA2/SecY2 system specifically required to export GspB. The GtfA-GtfB complex adds GlcNAc from UDP-GlcNAc to GspB, attaching the first sugar residue. Upon coexpression in E.coli with GtfA glycosylates GspB constructs. Binds the GspB protein substrate; alone this subunit only recognizes partially glycosylated GspB, but is constrained by GtfA to also recognize unglycosylated protein. The enzyme probably modifies its tertiary conformation by opening and closing its intersubunit interfaces to accomodate the increasingly glycosylated substrate. This chain is UDP-N-acetylglucosamine--peptide N-acetylglucosaminyltransferase stabilizing protein GtfB, found in Streptococcus gordonii.